The following is a 525-amino-acid chain: GMP synthase [glutamine-hydrolyzing] (525 aa).

The Glutamine amidotransferase type-1 domain maps to 9-207; the sequence is RILILDFGSQ…VRDICQCEAL (199 aa). The active-site Nucleophile is C86. Residues H181 and E183 contribute to the active site. The GMPS ATP-PPase domain maps to 208–400; the sequence is WTPAKIIDDA…LGLPYNMLYR (193 aa). An ATP-binding site is contributed by 235-241; sequence SGGVDSS.

In terms of assembly, homodimer.

It catalyses the reaction XMP + L-glutamine + ATP + H2O = GMP + L-glutamate + AMP + diphosphate + 2 H(+). The protein operates within purine metabolism; GMP biosynthesis; GMP from XMP (L-Gln route): step 1/1. In terms of biological role, catalyzes the synthesis of GMP from XMP. The polypeptide is GMP synthase [glutamine-hydrolyzing] (Pectobacterium carotovorum subsp. carotovorum (strain PC1)).